The chain runs to 675 residues: Putative L-type lectin-domain containing receptor kinase I.11 (675 aa).

Residues 1 to 22 form the signal peptide; that stretch reads MASERLHLILLVFFNHLTFLLS. The Extracellular segment spans residues 23–292; sequence QQEEAGFIYN…PKAKQEQTSP (270 aa). Residues 27–263 form a legume-lectin like region; that stretch reads AGFIYNGFGQ…YQYILGWSFS (237 aa). N-linked (GlcNAc...) asparagine glycans are attached at residues Asn-60, Asn-129, Asn-186, Asn-209, and Asn-230. The helical transmembrane segment at 293-313 threads the bilayer; that stretch reads LLIVLLMLLVLIMLAVLGGIY. Over 314 to 675 the chain is Cytoplasmic; the sequence is LYRRKKYAEV…THTITYGDGR (362 aa). The region spanning 348 to 620 is the Protein kinase domain; the sequence is FDKDGRLGKG…QVIQYINQNL (273 aa). ATP contacts are provided by residues 354 to 362 and Lys-376; that span reads LGKGGFGEV. Catalysis depends on Asp-472, which acts as the Proton acceptor.

It in the C-terminal section; belongs to the protein kinase superfamily. Ser/Thr protein kinase family. In the N-terminal section; belongs to the leguminous lectin family.

It is found in the cell membrane. It carries out the reaction L-seryl-[protein] + ATP = O-phospho-L-seryl-[protein] + ADP + H(+). The catalysed reaction is L-threonyl-[protein] + ATP = O-phospho-L-threonyl-[protein] + ADP + H(+). This chain is Putative L-type lectin-domain containing receptor kinase I.11 (LECRK111), found in Arabidopsis thaliana (Mouse-ear cress).